The sequence spans 309 residues: Mas-related G-protein coupled receptor member E (309 aa).

The Extracellular portion of the chain corresponds to 1-21 (MSLRVHTHSPSTQGDMAFNLT). Asn19 carries N-linked (GlcNAc...) asparagine glycosylation. The helical transmembrane segment at 22 to 42 (ILSLTELLSLGGLLGNGVALW) threads the bilayer. The Cytoplasmic segment spans residues 43–59 (LLNQNVYRNPFSIYLLD). A helical membrane pass occupies residues 60–80 (VACADLIFLCCHMVAIIPELL). Topologically, residues 81-91 (QDQLNFPEFVH) are extracellular. A helical membrane pass occupies residues 92–112 (ISLIMLRFFCYIVGLSLLVAI). Residues 113–132 (STEQCLATLFPSGYLCRRPR) lie on the Cytoplasmic side of the membrane. Residues 133-153 (YLTTCVCAFIWVLCLLLDLLL) traverse the membrane as a helical segment. Over 154–168 (SGACTQFFGAPSYHL) the chain is Extracellular. Residues 169 to 189 (CGMLWLVVAVLLAALCCTMCV) traverse the membrane as a helical segment. Topologically, residues 190-212 (TSLLLLLRVERGPERHQPRGFPT) are cytoplasmic. A helical membrane pass occupies residues 213 to 233 (LVLLVILLFLFCGLPFGIFWL). Over 234–247 (SKNLSWHTPLYFYH) the chain is Extracellular. An N-linked (GlcNAc...) asparagine glycan is attached at Asn236. The chain crosses the membrane as a helical span at residues 248–268 (FSFFMASVHSAAKPAIYFFLG). At 269–309 (STPGQRFQEPLRLVLQRALGDEAELGAVREASQGGLVDMTV) the chain is on the cytoplasmic side.

It belongs to the G-protein coupled receptor 1 family. Mas subfamily.

It localises to the cell membrane. Its function is as follows. Orphan receptor. May regulate nociceptor function and/or development, including the sensation or modulation of pain. In Rattus norvegicus (Rat), this protein is Mas-related G-protein coupled receptor member E (Mrgpre).